We begin with the raw amino-acid sequence, 207 residues long: MARYTEAVCRLCRREGMKLYLKGDRCYTDKCAISKRTYAPGQHGQSRKKLSNYGLQLREKQKAKRFYGVLESQFRKYFEIADKQAGITGENLLRLLETRLDNVAYRLGFGSSRAEARQLVVHGHFTVNGKKVDIPSYLVSAGDTIAVAEKSKSSAKFKALAENAKGNTPNWLTVDVEKLEGKVVALPSREDIDLEIAENLIVELYSK.

The region spanning 98 to 158 is the S4 RNA-binding domain; that stretch reads TRLDNVAYRL…EKSKSSAKFK (61 aa).

It belongs to the universal ribosomal protein uS4 family. Part of the 30S ribosomal subunit. Contacts protein S5. The interaction surface between S4 and S5 is involved in control of translational fidelity.

Functionally, one of the primary rRNA binding proteins, it binds directly to 16S rRNA where it nucleates assembly of the body of the 30S subunit. Its function is as follows. With S5 and S12 plays an important role in translational accuracy. The polypeptide is Small ribosomal subunit protein uS4A (Alkaliphilus oremlandii (strain OhILAs) (Clostridium oremlandii (strain OhILAs))).